Here is a 442-residue protein sequence, read N- to C-terminus: Probable 6-phospho-beta-glucosidase (442 aa).

NAD(+) is bound at residue 5 to 73; that stretch reads LKIVTIGGGS…VPIDIHLTLD (69 aa). Substrate-binding residues include Arg96 and Asn150. 2 residues coordinate Mn(2+): Cys172 and His202. Tyr256 acts as the Proton acceptor in catalysis.

It belongs to the glycosyl hydrolase 4 family. Requires NAD(+) as cofactor. It depends on a divalent metal cation as a cofactor.

It catalyses the reaction 6-phospho-beta-D-glucosyl-(1-&gt;4)-D-glucose + H2O = D-glucose 6-phosphate + D-glucose. Functionally, hydrolyzes phospho-beta-glucosides. This chain is Probable 6-phospho-beta-glucosidase (licH), found in Bacillus subtilis (strain 168).